The chain runs to 304 residues: Foldase protein PrsA (304 aa).

Positions 1-19 (MKKKLLSVAAVASVFTLAA) are cleaved as a signal peptide. Residue C20 is the site of N-palmitoyl cysteine attachment. C20 is lipidated: S-diacylglycerol cysteine. Residues 140 to 231 (KVEVKASHIL…FGYHIIKVTD (92 aa)) enclose the PpiC domain. The segment at 285-304 (FDLDKQEQQQMQQQMQQQQQ) is disordered. The span at 292–304 (QQQMQQQMQQQQQ) shows a compositional bias: low complexity.

Belongs to the PrsA family.

Its subcellular location is the cell membrane. It catalyses the reaction [protein]-peptidylproline (omega=180) = [protein]-peptidylproline (omega=0). In terms of biological role, plays a major role in protein secretion by helping the post-translocational extracellular folding of several secreted proteins. The protein is Foldase protein PrsA of Exiguobacterium sibiricum (strain DSM 17290 / CCUG 55495 / CIP 109462 / JCM 13490 / 255-15).